The sequence spans 55 residues: Transcriptional regulator CdrS (55 aa).

It belongs to the CdrS family.

Its subcellular location is the cytoplasm. Transcriptional regulator which plays a central role in the regulation of cell division. Activates the expression of the gene encoding the cell division protein FtsZ2, and of other genes encoding proteins predicted to function in critical aspects of cell division. Required for normal cell division but not for cell elongation. May act during the transition from stasis to growth. The CdrSL-FtsZ2 transcriptional network might coordinate cell division timing with cell growth. The protein is Transcriptional regulator CdrS of Halobacterium salinarum (strain ATCC 700922 / JCM 11081 / NRC-1) (Halobacterium halobium).